Reading from the N-terminus, the 262-residue chain is tRNA (guanine-N(1)-)-methyltransferase (262 aa).

Residues G111 and 130–135 (LGDFVL) contribute to the S-adenosyl-L-methionine site.

It belongs to the RNA methyltransferase TrmD family. Homodimer.

It is found in the cytoplasm. The enzyme catalyses guanosine(37) in tRNA + S-adenosyl-L-methionine = N(1)-methylguanosine(37) in tRNA + S-adenosyl-L-homocysteine + H(+). Functionally, specifically methylates guanosine-37 in various tRNAs. This is tRNA (guanine-N(1)-)-methyltransferase from Desulfitobacterium hafniense (strain Y51).